The chain runs to 155 residues: Ribonuclease H (155 aa).

The region spanning 1 to 143 is the RNase H type-1 domain; sequence MNQVEIYTDG…ADALANRGVD (143 aa). The Mg(2+) site is built by D9, E47, D69, and D135.

This sequence belongs to the RNase H family. Monomer. Mg(2+) is required as a cofactor.

Its subcellular location is the cytoplasm. The enzyme catalyses Endonucleolytic cleavage to 5'-phosphomonoester.. Functionally, endonuclease that specifically degrades the RNA of RNA-DNA hybrids. In Verminephrobacter eiseniae (strain EF01-2), this protein is Ribonuclease H.